The primary structure comprises 725 residues: Probable dipeptidyl-peptidase 5 (725 aa).

Positions 1-18 are cleaved as a signal peptide; sequence MGALRWLSIAATASTALA. N-linked (GlcNAc...) asparagine glycans are attached at residues Asn-75, Asn-96, Asn-153, Asn-258, Asn-383, and Asn-453. Ser-563 functions as the Charge relay system in the catalytic mechanism. Asn-610 carries an N-linked (GlcNAc...) asparagine glycan. Residues Asp-646 and His-678 each act as charge relay system in the active site.

This sequence belongs to the peptidase S9C family.

The protein resides in the secreted. Functionally, extracellular dipeptidyl-peptidase which removes N-terminal dipeptides sequentially from polypeptides having unsubstituted N-termini. This is Probable dipeptidyl-peptidase 5 (dpp5) from Aspergillus flavus (strain ATCC 200026 / FGSC A1120 / IAM 13836 / NRRL 3357 / JCM 12722 / SRRC 167).